The following is a 122-amino-acid chain: Large ribosomal subunit protein uL14 (122 aa).

It belongs to the universal ribosomal protein uL14 family. In terms of assembly, part of the 50S ribosomal subunit. Forms a cluster with proteins L3 and L19. In the 70S ribosome, L14 and L19 interact and together make contacts with the 16S rRNA in bridges B5 and B8.

Binds to 23S rRNA. Forms part of two intersubunit bridges in the 70S ribosome. In Anaeromyxobacter sp. (strain Fw109-5), this protein is Large ribosomal subunit protein uL14.